Here is a 378-residue protein sequence, read N- to C-terminus: tRNA (guanine(26)-N(2))-dimethyltransferase (378 aa).

Residues 4 to 374 (KEVTEGKVRI…KGYEEIIRCV (371 aa)) form the Trm1 methyltransferase domain. Residues Arg44, Arg69, Asp87, Asp114, and Ala115 each contribute to the S-adenosyl-L-methionine site. Zn(2+) contacts are provided by Cys246, Cys249, Cys263, and Cys266.

This sequence belongs to the class I-like SAM-binding methyltransferase superfamily. Trm1 family.

The catalysed reaction is guanosine(26) in tRNA + 2 S-adenosyl-L-methionine = N(2)-dimethylguanosine(26) in tRNA + 2 S-adenosyl-L-homocysteine + 2 H(+). Its function is as follows. Dimethylates a single guanine residue at position 26 of a number of tRNAs using S-adenosyl-L-methionine as donor of the methyl groups. The sequence is that of tRNA (guanine(26)-N(2))-dimethyltransferase from Saccharolobus islandicus (strain Y.G.57.14 / Yellowstone #1) (Sulfolobus islandicus).